A 1393-amino-acid polypeptide reads, in one-letter code: DNA-directed RNA polymerase subunit beta'' (1393 aa).

Zn(2+) contacts are provided by cysteine 224, cysteine 295, cysteine 302, and cysteine 305.

It belongs to the RNA polymerase beta' chain family. RpoC2 subfamily. As to quaternary structure, in plastids the minimal PEP RNA polymerase catalytic core is composed of four subunits: alpha, beta, beta', and beta''. When a (nuclear-encoded) sigma factor is associated with the core the holoenzyme is formed, which can initiate transcription. The cofactor is Zn(2+).

It is found in the plastid. The protein localises to the chloroplast. It carries out the reaction RNA(n) + a ribonucleoside 5'-triphosphate = RNA(n+1) + diphosphate. Functionally, DNA-dependent RNA polymerase catalyzes the transcription of DNA into RNA using the four ribonucleoside triphosphates as substrates. This chain is DNA-directed RNA polymerase subunit beta'', found in Manihot esculenta (Cassava).